A 348-amino-acid chain; its full sequence is Selenide, water dikinase (348 aa).

Residue Cys-17 is part of the active site. Residues Lys-20 and 48-50 (TRD) each bind ATP. Position 51 (Asp-51) interacts with Mg(2+). ATP-binding positions include Asp-68, Asp-91, and 139–141 (GHS). Residue Asp-91 participates in Mg(2+) binding. Asp-227 contacts Mg(2+).

It belongs to the selenophosphate synthase 1 family. Class I subfamily. As to quaternary structure, homodimer. It depends on Mg(2+) as a cofactor.

The enzyme catalyses hydrogenselenide + ATP + H2O = selenophosphate + AMP + phosphate + 2 H(+). Synthesizes selenophosphate from selenide and ATP. The chain is Selenide, water dikinase from Yersinia pseudotuberculosis serotype I (strain IP32953).